The sequence spans 449 residues: Glucose-6-phosphate isomerase 1 (449 aa).

Phosphothreonine is present on threonine 38. Glutamate 290 acts as the Proton donor in catalysis. Catalysis depends on residues histidine 311 and lysine 425.

It belongs to the GPI family. Homodimer.

The protein localises to the cytoplasm. It catalyses the reaction alpha-D-glucose 6-phosphate = beta-D-fructose 6-phosphate. It participates in carbohydrate biosynthesis; gluconeogenesis. The protein operates within carbohydrate degradation; glycolysis; D-glyceraldehyde 3-phosphate and glycerone phosphate from D-glucose: step 2/4. In terms of biological role, catalyzes the reversible isomerization of glucose-6-phosphate to fructose-6-phosphate. The sequence is that of Glucose-6-phosphate isomerase 1 from Geobacillus stearothermophilus (Bacillus stearothermophilus).